We begin with the raw amino-acid sequence, 68 residues long: U1-agatoxin-Ta1c (68 aa).

The first 17 residues, 1-17, serve as a signal peptide directing secretion; sequence MKLQLMICLVLLPCFFC. Disulfide bonds link Cys23–Cys53, Cys39–Cys49, and Cys42–Cys62. The residue at position 67 (Lys67) is a Lysine amide.

This sequence belongs to the helical arthropod-neuropeptide-derived (HAND) family. As to expression, expressed by the venom gland.

The protein resides in the secreted. Its function is as follows. Toxin that paralyzes insects. May have a direct effect on the insect central nervous system. The polypeptide is U1-agatoxin-Ta1c (Eratigena agrestis (Hobo spider)).